A 215-amino-acid polypeptide reads, in one-letter code: Casparian strip membrane protein 3 (215 aa).

The disordered stretch occupies residues 1–26 (MDSEKTGEAKITIQEPKAADPKGKGI). At 1–55 (MDSEKTGEAKITIQEPKAADPKGKGIADAPPPPVVVTTAKAIQKLPRGGWKKGVA) the chain is on the cytoplasmic side. Residues 56–76 (IFDFVVRLCAIATGLAATGIM) traverse the membrane as a helical segment. Topologically, residues 77–101 (GTTEQTLPFFTQFFQFHAEYNDLPT) are extracellular. The helical transmembrane segment at 102 to 122 (FMFFVFANGIASGYLILSLPF) threads the bilayer. Topologically, residues 123-136 (SIVCIVRPLAIVPR) are cytoplasmic. The chain crosses the membrane as a helical span at residues 137–157 (LLLIIFDTVVMALTIAAASAA). Residues 158–189 (AAIVYLAHNGNSNANWNAICQQFNDFCQQTST) lie on the Extracellular side of the membrane. The helical transmembrane segment at 190–210 (AVVASFITAAMLTFLIVLSAF) threads the bilayer. Over 211 to 215 (ALKRN) the chain is Cytoplasmic.

Belongs to the Casparian strip membrane proteins (CASP) family. Homodimer and heterodimers.

The protein resides in the cell membrane. Functionally, regulates membrane-cell wall junctions and localized cell wall deposition. Required for establishment of the Casparian strip membrane domain (CSD) and the subsequent formation of Casparian strips, a cell wall modification of the root endodermis that determines an apoplastic barrier between the intraorganismal apoplasm and the extraorganismal apoplasm and prevents lateral diffusion. In Ricinus communis (Castor bean), this protein is Casparian strip membrane protein 3.